A 590-amino-acid chain; its full sequence is Pentatricopeptide repeat-containing protein At2g46050, mitochondrial (590 aa).

A mitochondrion-targeting transit peptide spans 1-109; the sequence is MRFTFLRSTR…RNIVTWNILI (109 aa). PPR repeat units lie at residues 141–175, 176–206, 207–241, 244–266, 275–305, 306–340, 341–375, 376–406, 407–437, 441–471, and 477–507; these read DHVS…GLES, SCFP…VLDR, DLVL…KNRF, DYFT…IHAI, DIPV…MVVR, NVVS…NLQP, DELT…GSAD, FLSV…IREP, DLVS…MLQK, DKIT…MTEF, and EDEH…MPTE. A type E motif region spans residues 512-588; sequence ALAAFTGGCN…TPGCSWLGDY (77 aa).

The protein belongs to the PPR family. PCMP-E subfamily.

Its subcellular location is the mitochondrion. The sequence is that of Pentatricopeptide repeat-containing protein At2g46050, mitochondrial (PCMP-E39) from Arabidopsis thaliana (Mouse-ear cress).